Reading from the N-terminus, the 337-residue chain is UDP-3-O-acylglucosamine N-acyltransferase (337 aa).

The active-site Proton acceptor is the His-238.

It belongs to the transferase hexapeptide repeat family. LpxD subfamily. Homotrimer.

It carries out the reaction a UDP-3-O-[(3R)-3-hydroxyacyl]-alpha-D-glucosamine + a (3R)-hydroxyacyl-[ACP] = a UDP-2-N,3-O-bis[(3R)-3-hydroxyacyl]-alpha-D-glucosamine + holo-[ACP] + H(+). It functions in the pathway bacterial outer membrane biogenesis; LPS lipid A biosynthesis. In terms of biological role, catalyzes the N-acylation of UDP-3-O-acylglucosamine using 3-hydroxyacyl-ACP as the acyl donor. Is involved in the biosynthesis of lipid A, a phosphorylated glycolipid that anchors the lipopolysaccharide to the outer membrane of the cell. This chain is UDP-3-O-acylglucosamine N-acyltransferase, found in Xanthomonas oryzae pv. oryzae (strain KACC10331 / KXO85).